The primary structure comprises 182 residues: ATP synthase subunit delta (182 aa).

It belongs to the ATPase delta chain family. In terms of assembly, F-type ATPases have 2 components, F(1) - the catalytic core - and F(0) - the membrane proton channel. F(1) has five subunits: alpha(3), beta(3), gamma(1), delta(1), epsilon(1). CF(0) has four main subunits: a(1), b(1), b'(1) and c(10-14). The alpha and beta chains form an alternating ring which encloses part of the gamma chain. F(1) is attached to F(0) by a central stalk formed by the gamma and epsilon chains, while a peripheral stalk is formed by the delta, b and b' chains.

The protein resides in the cellular thylakoid membrane. Its function is as follows. F(1)F(0) ATP synthase produces ATP from ADP in the presence of a proton or sodium gradient. F-type ATPases consist of two structural domains, F(1) containing the extramembraneous catalytic core and F(0) containing the membrane proton channel, linked together by a central stalk and a peripheral stalk. During catalysis, ATP synthesis in the catalytic domain of F(1) is coupled via a rotary mechanism of the central stalk subunits to proton translocation. In terms of biological role, this protein is part of the stalk that links CF(0) to CF(1). It either transmits conformational changes from CF(0) to CF(1) or is implicated in proton conduction. In Prochlorococcus marinus (strain NATL2A), this protein is ATP synthase subunit delta.